We begin with the raw amino-acid sequence, 103 residues long: Histone H4 (103 aa).

Residues 1–14 are compositionally biased toward gly residues; sequence MSGRGKGGKGLGKG. The interval 1 to 20 is disordered; the sequence is MSGRGKGGKGLGKGGAKRHR. N6-(2-hydroxyisobutyryl)lysine; alternate is present on residues Lys-6, Lys-9, Lys-13, Lys-17, Lys-32, and Lys-45. Lys-6 is modified (N6-acetyl-N6-methyllysine; alternate). N6-butyryllysine; alternate occurs at positions 6, 9, 13, 17, 32, and 45. The residue at position 6 (Lys-6) is an N6-glutaryllysine; alternate. Lys-9 is modified (N6-propionyllysine; alternate). Lys-13 is subject to N6-acetyl-N6-methyllysine; alternate. Lys-13 is modified (N6-glutaryllysine; alternate). 3 positions are modified to N6-propionyllysine; alternate: Lys-17, Lys-32, and Lys-45. A DNA-binding region spans residues 17–21; that stretch reads KRHRK. Lys-32 is subject to N6-glutaryllysine; alternate. Lys-32 carries the N6-succinyllysine; alternate modification. Residues Lys-60, Lys-78, Lys-80, and Lys-92 each carry the N6-glutaryllysine; alternate modification. Lys-60 is modified (N6-(2-hydroxyisobutyryl)lysine). N6-(2-hydroxyisobutyryl)lysine; alternate occurs at positions 78, 80, and 92. 3 positions are modified to N6-butyryllysine; alternate: Lys-78, Lys-80, and Lys-92. N6-propionyllysine; alternate is present on residues Lys-78, Lys-80, and Lys-92. At Lys-78 the chain carries N6-succinyllysine. At Lys-92 the chain carries N6-succinyllysine; alternate.

Belongs to the histone H4 family. As to quaternary structure, the nucleosome is a histone octamer containing two molecules each of H2A, H2B, H3 and H4 assembled in one H3-H4 heterotetramer and two H2A-H2B heterodimers. The octamer wraps approximately 147 bp of DNA. In terms of processing, butyrylation of histones marks active promoters and competes with histone acetylation. Post-translationally, glutarylation at Lys-92 (H4K91glu) destabilizes nucleosomes by promoting dissociation of the H2A-H2B dimers from nucleosomes.

Its subcellular location is the nucleus. The protein resides in the chromosome. Functionally, core component of nucleosome. Nucleosomes wrap and compact DNA into chromatin, limiting DNA accessibility to the cellular machineries which require DNA as a template. Histones thereby play a central role in transcription regulation, DNA repair, DNA replication and chromosomal stability. DNA accessibility is regulated via a complex set of post-translational modifications of histones, also called histone code, and nucleosome remodeling. This Oikopleura dioica (Tunicate) protein is Histone H4 (H4.1).